Reading from the N-terminus, the 521-residue chain is CDP-diacylglycerol--glycerol-3-phosphate 3-phosphatidyltransferase (521 aa).

91 to 98 (ASLYLGKS) contributes to the ATP binding site. 2 PLD phosphodiesterase domains span residues 177 to 203 (GLGL…SNDY) and 419 to 457 (NGWS…TRRA). Active-site residues include His182, Lys184, and Asp189.

It belongs to the CDP-alcohol phosphatidyltransferase class-II family.

It localises to the mitochondrion. The enzyme catalyses a CDP-1,2-diacyl-sn-glycerol + sn-glycerol 3-phosphate = a 1,2-diacyl-sn-glycero-3-phospho-(1'-sn-glycero-3'-phosphate) + CMP + H(+). The protein operates within phospholipid metabolism; phosphatidylglycerol biosynthesis; phosphatidylglycerol from CDP-diacylglycerol: step 1/2. Essential for the viability of mitochondrial petite mutant. Catalyzes the committed step to the synthesis of the acidic phospholipids. This Saccharomyces pastorianus (Lager yeast) protein is CDP-diacylglycerol--glycerol-3-phosphate 3-phosphatidyltransferase (PGS1).